We begin with the raw amino-acid sequence, 439 residues long: Probable serine/threonine-protein kinase WNK6 (439 aa).

The tract at residues methionine 1–proline 30 is disordered. A compositionally biased stretch (acidic residues) spans aspartate 10 to glutamate 27. The 259-residue stretch at leucine 35–leucine 293 folds into the Protein kinase domain. ATP is bound by residues threonine 116–phenylalanine 119 and lysine 166. Residue aspartate 183 is the Proton acceptor of the active site.

Belongs to the protein kinase superfamily. Ser/Thr protein kinase family. WNK subfamily.

It carries out the reaction L-seryl-[protein] + ATP = O-phospho-L-seryl-[protein] + ADP + H(+). The enzyme catalyses L-threonyl-[protein] + ATP = O-phospho-L-threonyl-[protein] + ADP + H(+). The chain is Probable serine/threonine-protein kinase WNK6 (WNK6) from Oryza sativa subsp. japonica (Rice).